The following is a 485-amino-acid chain: Telomeric DNA-binding factor trf1 (485 aa).

A compositionally biased stretch (basic and acidic residues) spans 1–20; sequence MSKRSLDPSDDFKGQKRLAI. The tract at residues 1–23 is disordered; that stretch reads MSKRSLDPSDDFKGQKRLAIDPE. Positions 400-457 constitute an HTH myb-type domain; sequence RRVANRRSWTKEEEEALLDGLDLVKGPRWSQILELYGPGGKKSEVLKYRNQVQLKDKA. Residues 428–453 constitute a DNA-binding region (H-T-H motif); it reads WSQILELYGPGGKKSEVLKYRNQVQL.

As to quaternary structure, homodimer.

It is found in the nucleus. In terms of biological role, binds the telomeric double-stranded TTACAGG repeat and regulates telomere length. The chain is Telomeric DNA-binding factor trf1 (trf1) from Schizosaccharomyces pombe (strain 972 / ATCC 24843) (Fission yeast).